The primary structure comprises 148 residues: UPF0178 protein BH16190 (148 aa).

It belongs to the UPF0178 family.

This Bartonella henselae (strain ATCC 49882 / DSM 28221 / CCUG 30454 / Houston 1) (Rochalimaea henselae) protein is UPF0178 protein BH16190.